The sequence spans 69 residues: UPF0337 protein YjbJ (69 aa).

This sequence belongs to the UPF0337 (CsbD) family.

This chain is UPF0337 protein YjbJ (yjbJ), found in Escherichia coli O157:H7.